The following is a 600-amino-acid chain: Monooxygenase ptmN (600 aa).

This sequence belongs to the FMO family. Requires FAD as cofactor.

It functions in the pathway secondary metabolite biosynthesis. Functionally, monooxygenase; part of the gene cluster that mediates the biosynthesis of the indole diterpenes penitrems. The geranylgeranyl diphosphate (GGPP) synthase ptmG catalyzes the first step in penitrem biosynthesis via conversion of farnesyl pyrophosphate and isopentyl pyrophosphate into geranylgeranyl pyrophosphate (GGPP). Condensation of indole-3-glycerol phosphate with GGPP by the prenyl transferase ptmC then forms 3-geranylgeranylindole (3-GGI). Epoxidation by the FAD-dependent monooxygenase ptmM leads to a epoxidized-GGI that is substrate of the terpene cyclase ptmB for cyclization to yield paspaline. Paspaline is subsequently converted to 13-desoxypaxilline by the cytochrome P450 monooxygenase ptmP, the latter being then converted to paxilline by the cytochrome P450 monooxygenase ptmQ. Paxilline is converted to beta-paxitriol via C-10 ketoreduction by the short-chain dehydrogenase ptmH which can be monoprenylated at the C-20 by the indole diterpene prenyltransferase ptmD. A two-step elimination (acetylation and elimination) process performed by the O-acetyltransferase ptmV and ptmI leads to the production of the prenylated form of penijanthine. The FAD-linked oxidoreductase ptmO then converts the prenylated form of penijanthine into PC-M5 which is in turn transformed into PC-M4 by the aromatic dimethylallyltransferase ptmE. Five sequential oxidative transformations performed by the cytochrome P450 monooxygenases ptmK, ptmU, ptmL, ptmN and ptmJ yield the various penitrem compounds. PtmK, ptmU and ptmM are involved in the formation of the key bicyclic ring of penitrem C via the formation of the intermediates secopenitrem D and penitrem D. PtmL catalyzes the epoxidation of penitrem D and C to yield penitrem B and F, respectively. PtmJ catalyzes the last benzylic hydroxylation to convert penitrem B to prenitrem E and penitrem F to penitrem A. The polypeptide is Monooxygenase ptmN (Penicillium ochrochloron).